The sequence spans 126 residues: L-alanine exporter AlaE (126 aa).

The helical transmembrane segment at 23 to 43 threads the bilayer; it reads FALVVYCFFTGMAIEILLSGM.

The protein belongs to the AlaE exporter family.

It is found in the cell inner membrane. Functionally, exports L-alanine. This Sodalis glossinidius (strain morsitans) protein is L-alanine exporter AlaE.